A 1017-amino-acid chain; its full sequence is Protein HIR2 (1017 aa).

WD repeat units lie at residues 10–49 (YHNG…ELSK), 74–117 (CHKS…QLFP), 124–163 (SEVN…FQEL), 167–208 (CHEK…DDTS), 228–271 (PLNV…TNIE), 275–326 (GHDF…PITV), and 330–371 (AVQG…YTFS). Residues 417 to 561 (ISTTTSSSNT…APSDLPRSNS (145 aa)) form a disordered region. Acidic residues predominate over residues 473 to 483 (LDDDIDGDGDD). Composition is skewed to polar residues over residues 518 to 535 (SDST…VTTK) and 545 to 561 (LISS…RSNS).

This sequence belongs to the WD repeat HIR1 family.

Its subcellular location is the nucleus. Required for replication-independent chromatin assembly and for the periodic repression of histone gene transcription during the cell cycle. This chain is Protein HIR2 (HIR2), found in Candida albicans (strain SC5314 / ATCC MYA-2876) (Yeast).